A 340-amino-acid chain; its full sequence is Meiotic recombination protein DMC1/LIM15 homolog (340 aa).

126-133 contributes to the ATP binding site; it reads GEFRTGKT. DsDNA is bound at residue R230. Residues R230, F233, R236, R242, and R311 each coordinate ssDNA. R236 and R242 together coordinate dsDNA.

The protein belongs to the RecA family. DMC1 subfamily. As to quaternary structure, double stacked ring-shaped homooctamer. Interacts with BRCA2. Interacts with the MND1-PSMC3IP heterodimer. Interacts with RAD51AP1; the interaction is direct and stimulates DMC1-mediated homologous recombination. Testis.

It is found in the nucleus. The protein resides in the chromosome. In terms of biological role, participates in meiotic recombination, specifically in homologous strand assimilation, which is required for the resolution of meiotic double-strand breaks. The chain is Meiotic recombination protein DMC1/LIM15 homolog from Mus musculus (Mouse).